Consider the following 385-residue polypeptide: S-adenosylmethionine synthase (385 aa).

Position 16 (His16) interacts with ATP. Asp18 is a Mg(2+) binding site. Glu44 provides a ligand contact to K(+). Glu57 and Gln100 together coordinate L-methionine. The segment at 100 to 110 (QSPDINQGVDR) is flexible loop. ATP is bound by residues 164–166 (DGK), 230–231 (KF), Asp239, 245–246 (RK), Ala262, and Lys266. Asp239 lines the L-methionine pocket. Position 270 (Lys270) interacts with L-methionine.

It belongs to the AdoMet synthase family. In terms of assembly, homotetramer; dimer of dimers. Requires Mg(2+) as cofactor. K(+) is required as a cofactor.

The protein localises to the cytoplasm. It carries out the reaction L-methionine + ATP + H2O = S-adenosyl-L-methionine + phosphate + diphosphate. Its pathway is amino-acid biosynthesis; S-adenosyl-L-methionine biosynthesis; S-adenosyl-L-methionine from L-methionine: step 1/1. In terms of biological role, catalyzes the formation of S-adenosylmethionine (AdoMet) from methionine and ATP. The overall synthetic reaction is composed of two sequential steps, AdoMet formation and the subsequent tripolyphosphate hydrolysis which occurs prior to release of AdoMet from the enzyme. This is S-adenosylmethionine synthase from Helicobacter acinonychis (strain Sheeba).